The primary structure comprises 105 residues: Small ribosomal subunit protein uS10 (105 aa).

Belongs to the universal ribosomal protein uS10 family. As to quaternary structure, part of the 30S ribosomal subunit.

Its function is as follows. Involved in the binding of tRNA to the ribosomes. The polypeptide is Small ribosomal subunit protein uS10 (Solidesulfovibrio magneticus (strain ATCC 700980 / DSM 13731 / RS-1) (Desulfovibrio magneticus)).